We begin with the raw amino-acid sequence, 97 residues long: Small cell adhesion glycoprotein (97 aa).

At 1-36 (MNNLPATPSPEELMTTPVFQAPETMSPQAEEASTAL) the chain is on the extracellular side. The O-linked (GalNAc...) threonine glycan is linked to Thr-7. An O-linked (GalNAc...) serine glycan is attached at Ser-9. O-linked (GalNAc...) threonine glycosylation is found at Thr-15, Thr-16, and Thr-24. O-linked (GalNAc...) serine glycosylation occurs at Ser-26. A helical; Signal-anchor for type III membrane protein membrane pass occupies residues 37-57 (IAVVITVVFLTLLSVVTLIFF). At 58 to 97 (YLYKNKGSYVTYEPAEGEPSAILQMETDSAKGKEKEEYFI) the chain is on the cytoplasmic side.

Belongs to the SMAGP family. In terms of processing, O-glycosylated. The O-glycan is modified with sialic acid residues. As to expression, detected in brain (at protein level). Highly expressed in kidney and placenta. Detected in skin, breast, heart, lung, liver, prostate, spleen, small intestine, colon and stomach.

Its subcellular location is the cell membrane. It localises to the cytoplasmic vesicle membrane. Functionally, may play a role in epithelial cell-cell contacts. May play a role in tumor invasiveness and metastasis formation. The polypeptide is Small cell adhesion glycoprotein (Smagp) (Rattus norvegicus (Rat)).